A 369-amino-acid polypeptide reads, in one-letter code: 3-isopropylmalate dehydrogenase (369 aa).

NAD(+) is bound at residue 76–89; sequence GPKWDRNPSHLRPE. The substrate site is built by arginine 96, arginine 106, arginine 134, and aspartate 223. Aspartate 223, aspartate 247, and aspartate 251 together coordinate Mg(2+). 281 to 293 is a binding site for NAD(+); sequence GSAPDIAGQNKAN.

This sequence belongs to the isocitrate and isopropylmalate dehydrogenases family. LeuB type 1 subfamily. In terms of assembly, homodimer. The cofactor is Mg(2+). It depends on Mn(2+) as a cofactor.

It is found in the cytoplasm. It carries out the reaction (2R,3S)-3-isopropylmalate + NAD(+) = 4-methyl-2-oxopentanoate + CO2 + NADH. It functions in the pathway amino-acid biosynthesis; L-leucine biosynthesis; L-leucine from 3-methyl-2-oxobutanoate: step 3/4. Functionally, catalyzes the oxidation of 3-carboxy-2-hydroxy-4-methylpentanoate (3-isopropylmalate) to 3-carboxy-4-methyl-2-oxopentanoate. The product decarboxylates to 4-methyl-2 oxopentanoate. This chain is 3-isopropylmalate dehydrogenase (leuB), found in Priestia megaterium (strain DSM 319 / IMG 1521) (Bacillus megaterium).